The primary structure comprises 495 residues: ATP synthase subunit beta, chloroplastic (495 aa).

Residue 172 to 179 (GGAGVGKT) participates in ATP binding.

The protein belongs to the ATPase alpha/beta chains family. In terms of assembly, F-type ATPases have 2 components, CF(1) - the catalytic core - and CF(0) - the membrane proton channel. CF(1) has five subunits: alpha(3), beta(3), gamma(1), delta(1), epsilon(1). CF(0) has four main subunits: a(1), b(1), b'(1) and c(9-12).

It localises to the plastid. Its subcellular location is the chloroplast thylakoid membrane. The catalysed reaction is ATP + H2O + 4 H(+)(in) = ADP + phosphate + 5 H(+)(out). Its function is as follows. Produces ATP from ADP in the presence of a proton gradient across the membrane. The catalytic sites are hosted primarily by the beta subunits. In Brimeura amethystina (Spanish hyacinth), this protein is ATP synthase subunit beta, chloroplastic.